Consider the following 282-residue polypeptide: NADPH-dependent 7-cyano-7-deazaguanine reductase (282 aa).

88–90 (IES) is a substrate binding site. 90-91 (SK) lines the NADPH pocket. Catalysis depends on C190, which acts as the Thioimide intermediate. The active-site Proton donor is the D197. Residue 229–230 (HE) participates in substrate binding. 258–259 (RG) provides a ligand contact to NADPH.

Belongs to the GTP cyclohydrolase I family. QueF type 2 subfamily. Homodimer.

It localises to the cytoplasm. The catalysed reaction is 7-aminomethyl-7-carbaguanine + 2 NADP(+) = 7-cyano-7-deazaguanine + 2 NADPH + 3 H(+). It functions in the pathway tRNA modification; tRNA-queuosine biosynthesis. Catalyzes the NADPH-dependent reduction of 7-cyano-7-deazaguanine (preQ0) to 7-aminomethyl-7-deazaguanine (preQ1). In Escherichia coli O9:H4 (strain HS), this protein is NADPH-dependent 7-cyano-7-deazaguanine reductase.